Reading from the N-terminus, the 230-residue chain is Large ribosomal subunit protein uL1 (230 aa).

It belongs to the universal ribosomal protein uL1 family. As to quaternary structure, part of the 50S ribosomal subunit.

Functionally, binds directly to 23S rRNA. The L1 stalk is quite mobile in the ribosome, and is involved in E site tRNA release. Protein L1 is also a translational repressor protein, it controls the translation of the L11 operon by binding to its mRNA. The polypeptide is Large ribosomal subunit protein uL1 (Nitrobacter hamburgensis (strain DSM 10229 / NCIMB 13809 / X14)).